The chain runs to 77 residues: Tachyplesin-2 (77 aa).

The first 23 residues, 1 to 23, serve as a signal peptide directing secretion; that stretch reads MKKLVIALCLMMVLAVMVEEAEA. Intrachain disulfides connect C26–C39 and C30–C35. Residue R40 is modified to Arginine amide. A propeptide spanning residues 41 to 77 is cleaved from the precursor; the sequence is GKRNEVRQYRDRGYDVRAIPDETFFTRQDEDEDDDEE.

It belongs to the tachyplesin/polyphemusin family. As to expression, hemocytes.

It is found in the secreted. Significantly inhibits the growth of Gram-negative and Gram-positive bacteria. This chain is Tachyplesin-2, found in Tachypleus tridentatus (Japanese horseshoe crab).